Here is a 482-residue protein sequence, read N- to C-terminus: tRNA sulfurtransferase (482 aa).

The 105-residue stretch at 61-165 folds into the THUMP domain; sequence LAIRDALTRI…DDRLLLIKGR (105 aa). Residues 183 to 184, Lys-265, Gly-287, and Gln-296 each bind ATP; that span reads LI. An intrachain disulfide couples Cys-344 to Cys-456. The Rhodanese domain occupies 404–482; that stretch reads FGPNDVILDI…GFNNVKVYRP (79 aa). Cys-456 (cysteine persulfide intermediate) is an active-site residue.

The protein belongs to the ThiI family.

The protein resides in the cytoplasm. The catalysed reaction is [ThiI sulfur-carrier protein]-S-sulfanyl-L-cysteine + a uridine in tRNA + 2 reduced [2Fe-2S]-[ferredoxin] + ATP + H(+) = [ThiI sulfur-carrier protein]-L-cysteine + a 4-thiouridine in tRNA + 2 oxidized [2Fe-2S]-[ferredoxin] + AMP + diphosphate. The enzyme catalyses [ThiS sulfur-carrier protein]-C-terminal Gly-Gly-AMP + S-sulfanyl-L-cysteinyl-[cysteine desulfurase] + AH2 = [ThiS sulfur-carrier protein]-C-terminal-Gly-aminoethanethioate + L-cysteinyl-[cysteine desulfurase] + A + AMP + 2 H(+). It participates in cofactor biosynthesis; thiamine diphosphate biosynthesis. In terms of biological role, catalyzes the ATP-dependent transfer of a sulfur to tRNA to produce 4-thiouridine in position 8 of tRNAs, which functions as a near-UV photosensor. Also catalyzes the transfer of sulfur to the sulfur carrier protein ThiS, forming ThiS-thiocarboxylate. This is a step in the synthesis of thiazole, in the thiamine biosynthesis pathway. The sulfur is donated as persulfide by IscS. The sequence is that of tRNA sulfurtransferase from Escherichia coli (strain K12 / MC4100 / BW2952).